The chain runs to 356 residues: Uroporphyrinogen decarboxylase (356 aa).

Residues 23–27 (RQAGR), Asp-72, Tyr-148, Ser-203, and His-321 each bind substrate.

The protein belongs to the uroporphyrinogen decarboxylase family. Homodimer.

It localises to the cytoplasm. The enzyme catalyses uroporphyrinogen III + 4 H(+) = coproporphyrinogen III + 4 CO2. The protein operates within porphyrin-containing compound metabolism; protoporphyrin-IX biosynthesis; coproporphyrinogen-III from 5-aminolevulinate: step 4/4. Catalyzes the decarboxylation of four acetate groups of uroporphyrinogen-III to yield coproporphyrinogen-III. The protein is Uroporphyrinogen decarboxylase of Chloroflexus aggregans (strain MD-66 / DSM 9485).